The sequence spans 530 residues: Pyridoxine/pyridoxamine 5'-phosphate oxidase 1, chloroplastic (530 aa).

The N-terminal 64 residues, 1 to 64, are a transit peptide targeting the chloroplast; the sequence is MRNVIRRVTT…TLCTKVIIPN (64 aa). N-acetylmethionine is present on Met-65. The YjeF N-terminal domain occupies 81 to 297; it reads AAEIDETLMG…SVAEKYKLEL (217 aa). 131–135 is a binding site for (6S)-NADPHX; it reads NNGGD. The K(+) site is built by Asn-132 and Asp-196. (6S)-NADPHX-binding positions include 200 to 206 and Asp-238; that span reads GFSFHGA. Residue Ser-241 coordinates K(+). 247 to 250 contributes to the pyridoxal 5'-phosphate binding site; sequence EGDH. 321–324 serves as a coordination point for substrate; sequence RVNY. 325–327 provides a ligand contact to pyridoxal 5'-phosphate; that stretch reads VSP. 374–377 is an FMN binding site; sequence RMVL. Residue Lys-379 coordinates pyridoxal 5'-phosphate. FMN contacts are provided by residues 389 to 390, 395 to 396, and Gln-418; these read FT and KK. Residues Tyr-436, Arg-440, and Ser-444 each contribute to the pyridoxal 5'-phosphate site. FMN is bound by residues 453 to 454 and Trp-499; that span reads QS. Position 505–507 (505–507) interacts with pyridoxal 5'-phosphate; sequence RLH. Arg-509 serves as a coordination point for FMN.

It in the N-terminal section; belongs to the NnrE/AIBP family. In the C-terminal section; belongs to the pyridoxamine 5'-phosphate oxidase family. Homodimer. Requires FMN as cofactor. K(+) is required as a cofactor. Expressed in leaves, stems, flowers and roots.

It is found in the plastid. It localises to the chloroplast. It carries out the reaction pyridoxamine 5'-phosphate + O2 + H2O = pyridoxal 5'-phosphate + H2O2 + NH4(+). It catalyses the reaction pyridoxine 5'-phosphate + O2 = pyridoxal 5'-phosphate + H2O2. The catalysed reaction is (6R)-NADHX = (6S)-NADHX. The enzyme catalyses (6R)-NADPHX = (6S)-NADPHX. It participates in cofactor metabolism; pyridoxal 5'-phosphate salvage; pyridoxal 5'-phosphate from pyridoxamine 5'-phosphate: step 1/1. It functions in the pathway cofactor metabolism; pyridoxal 5'-phosphate salvage; pyridoxal 5'-phosphate from pyridoxine 5'-phosphate: step 1/1. Functionally, catalyzes the oxidation of either pyridoxine 5'-phosphate (PNP) or pyridoxamine 5'-phosphate (PMP) into pyridoxal 5'-phosphate (PLP). Involved in the PLP salvage pathway. Has a higher preference for PNP over PMP. May also catalyze the epimerization of the S- and R-forms of NAD(P)HX, a damaged form of NAD(P)H that is a result of enzymatic or heat-dependent hydration. This is a prerequisite for the S-specific NAD(P)H-hydrate dehydratase to allow the repair of both epimers of NAD(P)HX. In Arabidopsis thaliana (Mouse-ear cress), this protein is Pyridoxine/pyridoxamine 5'-phosphate oxidase 1, chloroplastic (PPOX1).